The following is a 527-amino-acid chain: Bifunctional purine biosynthesis protein PurH (527 aa).

Residues 1–149 (MASDFLPVRR…KNFARVAVAA (149 aa)) form the MGS-like domain.

It belongs to the PurH family.

It carries out the reaction (6R)-10-formyltetrahydrofolate + 5-amino-1-(5-phospho-beta-D-ribosyl)imidazole-4-carboxamide = 5-formamido-1-(5-phospho-D-ribosyl)imidazole-4-carboxamide + (6S)-5,6,7,8-tetrahydrofolate. It catalyses the reaction IMP + H2O = 5-formamido-1-(5-phospho-D-ribosyl)imidazole-4-carboxamide. Its pathway is purine metabolism; IMP biosynthesis via de novo pathway; 5-formamido-1-(5-phospho-D-ribosyl)imidazole-4-carboxamide from 5-amino-1-(5-phospho-D-ribosyl)imidazole-4-carboxamide (10-formyl THF route): step 1/1. The protein operates within purine metabolism; IMP biosynthesis via de novo pathway; IMP from 5-formamido-1-(5-phospho-D-ribosyl)imidazole-4-carboxamide: step 1/1. In Xanthomonas axonopodis pv. citri (strain 306), this protein is Bifunctional purine biosynthesis protein PurH.